The primary structure comprises 234 residues: LexA repressor (234 aa).

The tract at residues 1–29 (MSDAANPEGHKRSLPGRPPGIRADSSGLT) is disordered. Residues 52–72 (MREIGQAVGLSSTSSVAHQLM) constitute a DNA-binding region (H-T-H motif). Positions 90-109 (YEVRGSDQAASVQPTDTAGK) are disordered. Active-site for autocatalytic cleavage activity residues include Ser-158 and Lys-195.

The protein belongs to the peptidase S24 family. As to quaternary structure, homodimer.

The enzyme catalyses Hydrolysis of Ala-|-Gly bond in repressor LexA.. Represses a number of genes involved in the response to DNA damage (SOS response), including recA and lexA. In the presence of single-stranded DNA, RecA interacts with LexA causing an autocatalytic cleavage which disrupts the DNA-binding part of LexA, leading to derepression of the SOS regulon and eventually DNA repair. This chain is LexA repressor, found in Streptomyces coelicolor (strain ATCC BAA-471 / A3(2) / M145).